A 123-amino-acid chain; its full sequence is Small ribosomal subunit protein uS12 (123 aa).

A 3-methylthioaspartic acid modification is found at aspartate 89. The interval 100 to 123 is disordered; that stretch reads GSLDTSGVKGRNQGRSKYGTKKPK. Residues 111–123 are compositionally biased toward basic residues; it reads NQGRSKYGTKKPK.

Belongs to the universal ribosomal protein uS12 family. In terms of assembly, part of the 30S ribosomal subunit. Contacts proteins S8 and S17. May interact with IF1 in the 30S initiation complex.

Its function is as follows. With S4 and S5 plays an important role in translational accuracy. In terms of biological role, interacts with and stabilizes bases of the 16S rRNA that are involved in tRNA selection in the A site and with the mRNA backbone. Located at the interface of the 30S and 50S subunits, it traverses the body of the 30S subunit contacting proteins on the other side and probably holding the rRNA structure together. The combined cluster of proteins S8, S12 and S17 appears to hold together the shoulder and platform of the 30S subunit. The sequence is that of Small ribosomal subunit protein uS12 from Pseudomonas syringae pv. syringae (strain B728a).